Consider the following 600-residue polypeptide: PWWP domain-containing protein 2B (600 aa).

Disordered stretches follow at residues 81 to 115, 143 to 171, 186 to 350, 366 to 408, and 426 to 477; these read ETGPLHPHHKDPEKDQPPKTAVSEPPPPLIPPVPA, WVPQPPPRTIKRTRRRLSRNRDPGRLILS, KSTV…LGDG, GCPR…PQGK, and DCTS…TVPP. Residues 104–115 show a composition bias toward pro residues; the sequence is EPPPPLIPPVPA. A compositionally biased stretch (basic residues) spans 151–160; the sequence is TIKRTRRRLS. Over residues 187-200 the composition is skewed to polar residues; sequence STVSPQEASPSPLN. S190 and S210 each carry phosphoserine. Basic and acidic residues predominate over residues 239 to 252; sequence EKREEDRVAGERVP. Phosphoserine is present on S254. Polar residues predominate over residues 286-297; it reads PQQSLQNGSQDS. Over residues 298–309 the composition is skewed to basic and acidic residues; the sequence is EVSRDVEPRGGG. Residues 328 to 339 are compositionally biased toward pro residues; it reads PVPPISDLPPPK. Positions 381–395 are enriched in low complexity; sequence DGSSHGLEDLSSGSS. Residues 443–456 show a composition bias toward polar residues; that stretch reads SSGSEVTSPDTGDL. A Phosphoserine modification is found at S457. The span at 457–468 shows a compositional bias: low complexity; that stretch reads SSGDSASVPSSS. A PWWP domain is found at 500–560; that stretch reads VGDIVWGKIH…ISKLSPFSEF (61 aa).

Component of a MTA1-specific subcomplex of the NuRD complex composed of PWWP2B, MTA1 and HDAC1 but does not contain CHD4 and MBD3. Interacts with MTA1, MTA2, MTA3, HDAC1, HDAC2, RBBP4, RBBP7, BRCC3 and ZNF516. Does not interact with CHD4 and MBD3. Deubiquitinated by BRCC3; leading to its stabilization. Expressed in the brown adipose tissue.

It localises to the nucleus. Chromatin-binding protein that acts as an adapter between distinct nucleosome components (H3K36me3 or H2A.Z) and chromatin-modifying complexes, contributing to the regulation of the levels of histone acetylation at actively transcribed genes. Competes with CHD4 and MBD3 for interaction with MTA1 to form a NuRD subcomplex, preventing the formation of full NuRD complex (containing CHD4 and MBD3), leading to recruitment of HDACs to gene promoters resulting in turn in the deacetylation of nearby H3K27 and H2A.Z. Plays a role in facilitating transcriptional elongation through regulation of histone acetylation. Negatively regulates brown adipocyte thermogenesis by interacting with and stabilizing HDAC1 at the UCP1 gene promoter, thereby promoting histone deacetylation at the promoter leading to the repression of UCP1 expression. The protein is PWWP domain-containing protein 2B (Pwwp2b) of Mus musculus (Mouse).